Consider the following 334-residue polypeptide: 4-hydroxy-3-methylbut-2-enyl diphosphate reductase (334 aa).

C19 serves as a coordination point for [4Fe-4S] cluster. Residues H48 and H84 each coordinate (2E)-4-hydroxy-3-methylbut-2-enyl diphosphate. Dimethylallyl diphosphate is bound by residues H48 and H84. Residues H48 and H84 each contribute to the isopentenyl diphosphate site. C106 lines the [4Fe-4S] cluster pocket. H134 contributes to the (2E)-4-hydroxy-3-methylbut-2-enyl diphosphate binding site. Residue H134 participates in dimethylallyl diphosphate binding. An isopentenyl diphosphate-binding site is contributed by H134. The active-site Proton donor is E136. T175 provides a ligand contact to (2E)-4-hydroxy-3-methylbut-2-enyl diphosphate. C205 provides a ligand contact to [4Fe-4S] cluster. Positions 233, 234, 235, and 278 each coordinate (2E)-4-hydroxy-3-methylbut-2-enyl diphosphate. Dimethylallyl diphosphate contacts are provided by S233, S234, N235, and S278. Isopentenyl diphosphate is bound by residues S233, S234, N235, and S278.

The protein belongs to the IspH family. [4Fe-4S] cluster is required as a cofactor.

The enzyme catalyses isopentenyl diphosphate + 2 oxidized [2Fe-2S]-[ferredoxin] + H2O = (2E)-4-hydroxy-3-methylbut-2-enyl diphosphate + 2 reduced [2Fe-2S]-[ferredoxin] + 2 H(+). It catalyses the reaction dimethylallyl diphosphate + 2 oxidized [2Fe-2S]-[ferredoxin] + H2O = (2E)-4-hydroxy-3-methylbut-2-enyl diphosphate + 2 reduced [2Fe-2S]-[ferredoxin] + 2 H(+). Its pathway is isoprenoid biosynthesis; dimethylallyl diphosphate biosynthesis; dimethylallyl diphosphate from (2E)-4-hydroxy-3-methylbutenyl diphosphate: step 1/1. The protein operates within isoprenoid biosynthesis; isopentenyl diphosphate biosynthesis via DXP pathway; isopentenyl diphosphate from 1-deoxy-D-xylulose 5-phosphate: step 6/6. Catalyzes the conversion of 1-hydroxy-2-methyl-2-(E)-butenyl 4-diphosphate (HMBPP) into a mixture of isopentenyl diphosphate (IPP) and dimethylallyl diphosphate (DMAPP). Acts in the terminal step of the DOXP/MEP pathway for isoprenoid precursor biosynthesis. The polypeptide is 4-hydroxy-3-methylbut-2-enyl diphosphate reductase (Chelativorans sp. (strain BNC1)).